A 101-amino-acid polypeptide reads, in one-letter code: UPF0235 protein Cpha266_2081 (101 aa).

The protein belongs to the UPF0235 family.

The polypeptide is UPF0235 protein Cpha266_2081 (Chlorobium phaeobacteroides (strain DSM 266 / SMG 266 / 2430)).